The chain runs to 271 residues: Glutamate 5-kinase (271 aa).

An ATP-binding site is contributed by lysine 14. Residues serine 54, aspartate 141, and asparagine 157 each coordinate substrate. Residues 177–178 and 219–225 each bind ATP; these read SD and TGGMSSK.

The protein belongs to the glutamate 5-kinase family.

The protein localises to the cytoplasm. It catalyses the reaction L-glutamate + ATP = L-glutamyl 5-phosphate + ADP. It participates in amino-acid biosynthesis; L-proline biosynthesis; L-glutamate 5-semialdehyde from L-glutamate: step 1/2. Functionally, catalyzes the transfer of a phosphate group to glutamate to form L-glutamate 5-phosphate. The chain is Glutamate 5-kinase from Enterococcus faecalis (strain ATCC 700802 / V583).